Consider the following 259-residue polypeptide: 5'-nucleotidase SurE (259 aa).

Residues Asp-8, Asp-9, Ser-41, and Asn-93 each contribute to the a divalent metal cation site.

This sequence belongs to the SurE nucleotidase family. The cofactor is a divalent metal cation.

It localises to the cytoplasm. It carries out the reaction a ribonucleoside 5'-phosphate + H2O = a ribonucleoside + phosphate. Functionally, nucleotidase that shows phosphatase activity on nucleoside 5'-monophosphates. The polypeptide is 5'-nucleotidase SurE (Verminephrobacter eiseniae (strain EF01-2)).